The chain runs to 58 residues: Probable mRNA interferase HicA 2 (58 aa).

The protein belongs to the HicA mRNA interferase family. In terms of assembly, probably forms a complex with the cognate antitoxin HicB 2 which inhibits the mRNA interferase activity.

Its function is as follows. Toxic component of a type II toxin-antitoxin (TA) system. A probable translation-independent mRNA interferase. The protein is Probable mRNA interferase HicA 2 (hicA2) of Photorhabdus laumondii subsp. laumondii (strain DSM 15139 / CIP 105565 / TT01) (Photorhabdus luminescens subsp. laumondii).